Consider the following 328-residue polypeptide: Malate dehydrogenase (328 aa).

Residue 11–17 (GAAGQIG) participates in NAD(+) binding. Substrate contacts are provided by R92 and R98. NAD(+) contacts are provided by residues N105, Q112, and 129–131 (TGN). Residues N131 and R162 each coordinate substrate. H187 acts as the Proton acceptor in catalysis.

It belongs to the LDH/MDH superfamily. MDH type 2 family.

The catalysed reaction is (S)-malate + NAD(+) = oxaloacetate + NADH + H(+). Catalyzes the reversible oxidation of malate to oxaloacetate. In Paenarthrobacter aurescens (strain TC1), this protein is Malate dehydrogenase.